Consider the following 313-residue polypeptide: L-lactate dehydrogenase 1 (313 aa).

The NAD(+) site is built by Val-15, Asp-36, Arg-41, and Tyr-66. Residues Gln-83, Arg-89, and 121 to 124 each bind substrate; that span reads NPVD. Residues 119 to 121 and Ser-144 each bind NAD(+); that span reads ASN. Position 149-152 (149-152) interacts with substrate; it reads DTAR. Residues Arg-154 and His-169 each contribute to the beta-D-fructose 1,6-bisphosphate site. His-176 functions as the Proton acceptor in the catalytic mechanism. A Phosphotyrosine modification is found at Tyr-218. Thr-227 serves as a coordination point for substrate.

Belongs to the LDH/MDH superfamily. LDH family. In terms of assembly, homotetramer.

It localises to the cytoplasm. It carries out the reaction (S)-lactate + NAD(+) = pyruvate + NADH + H(+). The protein operates within fermentation; pyruvate fermentation to lactate; (S)-lactate from pyruvate: step 1/1. With respect to regulation, allosterically activated by fructose 1,6-bisphosphate (FBP). Functionally, catalyzes the conversion of lactate to pyruvate. In Listeria innocua serovar 6a (strain ATCC BAA-680 / CLIP 11262), this protein is L-lactate dehydrogenase 1.